Reading from the N-terminus, the 195-residue chain is MEASNVALVLPAPSLLTPSSTPSPSGEGMGTESMLLLFDDIWMKLMELAKKLRDIMRSYNVEKQRLAWELQVNVLQTQMKTIDEAFRASMITAGGAMLSGVLTIGLGAVGGETGLIAGQAVGHTAGGVMGLGAGVAQRQSDQDKAIADLQQNGAQSYNKSLTEIMEKATEIMQQIIGVGSSLVTVLAEILRALTR.

Residues 44-80 (KLMELAKKLRDIMRSYNVEKQRLAWELQVNVLQTQMK) adopt a coiled-coil conformation. Transmembrane regions (helical) follow at residues 90–110 (MITAGGAMLSGVLTIGLGAVG), 115–135 (LIAGQAVGHTAGGVMGLGAGV), and 170–190 (EIMQQIIGVGSSLVTVLAEIL).

This sequence belongs to the SctB/EspB family. As to quaternary structure, the core secretion machinery of the T3SS is composed of approximately 20 different proteins, including cytoplasmic components, a base, an export apparatus and a needle. This subunit is involved in the formation of a pore, called the translocon, in host membrane. May form a complex with SseB and SseC/SctE2. SseB is required for correct localization of SseD/SctB2 on the bacterial cell surface. Binds to the chaperone SseA.

Its subcellular location is the secreted. The protein localises to the cell surface. It localises to the host membrane. Component of the type III secretion system 2 (SPI-2 T3SS), also called injectisome, which is used to inject bacterial effector proteins into eukaryotic host cells. SseC/SctE2 and SseD/SctB2 are inserted into the host membrane where they form a pore and allow the translocation of effector proteins into the cytosol of target cells. Its function is as follows. Required for the translocation of SPI-2 effector proteins. Required for systemic Salmonella infection of the mouse. Essential for SpvB-induced actin depolymerization in the host cell cytoplasm. The protein is SPI-2 type 3 secretion system translocon protein SctB of Salmonella typhimurium (strain LT2 / SGSC1412 / ATCC 700720).